The primary structure comprises 109 residues: Nucleoid-associated protein Psyc_0793 (109 aa).

The protein belongs to the YbaB/EbfC family. Homodimer.

It localises to the cytoplasm. It is found in the nucleoid. Its function is as follows. Binds to DNA and alters its conformation. May be involved in regulation of gene expression, nucleoid organization and DNA protection. This Psychrobacter arcticus (strain DSM 17307 / VKM B-2377 / 273-4) protein is Nucleoid-associated protein Psyc_0793.